Consider the following 382-residue polypeptide: Succinate--CoA ligase [ADP-forming] subunit beta (382 aa).

Residues 9-237 (KQVFADAGIP…AAEGDELEQK (229 aa)) enclose the ATP-grasp domain. Residues Lys-45, 52–54 (GRG), Glu-91, Val-94, and Glu-99 each bind ATP. Asn-191 and Asp-205 together coordinate Mg(2+). Residues Asn-257 and 314-316 (GIT) each bind substrate.

The protein belongs to the succinate/malate CoA ligase beta subunit family. In terms of assembly, heterotetramer of two alpha and two beta subunits. Mg(2+) serves as cofactor.

The catalysed reaction is succinate + ATP + CoA = succinyl-CoA + ADP + phosphate. It catalyses the reaction GTP + succinate + CoA = succinyl-CoA + GDP + phosphate. It functions in the pathway carbohydrate metabolism; tricarboxylic acid cycle; succinate from succinyl-CoA (ligase route): step 1/1. Succinyl-CoA synthetase functions in the citric acid cycle (TCA), coupling the hydrolysis of succinyl-CoA to the synthesis of either ATP or GTP and thus represents the only step of substrate-level phosphorylation in the TCA. The beta subunit provides nucleotide specificity of the enzyme and binds the substrate succinate, while the binding sites for coenzyme A and phosphate are found in the alpha subunit. The polypeptide is Succinate--CoA ligase [ADP-forming] subunit beta (Haloarcula marismortui (strain ATCC 43049 / DSM 3752 / JCM 8966 / VKM B-1809) (Halobacterium marismortui)).